The following is a 208-amino-acid chain: MRIVALEGIDGSGVSTHSRLLHARLAGAGVKSCLWKEPTEGPVGRLIRGFLRSTEGVDSDLMALLFAADRLWGLRLGVVERCGGSPEVLVVDRYKYSSLAYQGVGSGLEWVDAVNRKAPEAEILVYIDVPTEVALRRITARERREVFETPEFLERVKSMYEEVLRLARARGVKVIRVEGVRGGVERGIEDVQGEIAERVFEALGLARA.

The defective ATP-binding stretch occupies residues 8–15; it reads GIDGSGVS.

This sequence belongs to the thymidylate kinase family.

It catalyses the reaction dTMP + ATP = dTDP + ADP. The sequence is that of Putative thymidylate kinase (tmk) from Aeropyrum pernix (strain ATCC 700893 / DSM 11879 / JCM 9820 / NBRC 100138 / K1).